Here is a 332-residue protein sequence, read N- to C-terminus: Protoheme IX farnesyltransferase (332 aa).

The next 7 helical transmembrane spans lie at 63–83 (LICT…LNCL), 109–129 (TVFL…ISGV), 132–152 (LAAG…TIIL), 160–180 (IVFG…AATG), 188–208 (WLFG…AILL), 245–265 (ILGV…LLPF), and 286–306 (AKGL…LLLI).

Belongs to the UbiA prenyltransferase family. Protoheme IX farnesyltransferase subfamily.

Its subcellular location is the cell inner membrane. The catalysed reaction is heme b + (2E,6E)-farnesyl diphosphate + H2O = Fe(II)-heme o + diphosphate. Its pathway is porphyrin-containing compound metabolism; heme O biosynthesis; heme O from protoheme: step 1/1. Its function is as follows. Converts heme B (protoheme IX) to heme O by substitution of the vinyl group on carbon 2 of heme B porphyrin ring with a hydroxyethyl farnesyl side group. In Prochlorococcus marinus (strain MIT 9515), this protein is Protoheme IX farnesyltransferase.